We begin with the raw amino-acid sequence, 170 residues long: Zinc finger matrin-type protein 5 (170 aa).

The segment at 51 to 79 (EQNKRPCRKFLLTGQCDFGSNCRFSHMSE) adopts a C3H1-type zinc-finger fold. The disordered stretch occupies residues 150–170 (PPSLRAPPPGGWPLQPSVQWG).

As to quaternary structure, component of the U11/U12 snRNPs that are part of the U12-type spliceosome.

It is found in the nucleus. This chain is Zinc finger matrin-type protein 5 (ZMAT5), found in Bos taurus (Bovine).